A 145-amino-acid chain; its full sequence is D-aminoacyl-tRNA deacylase (145 aa).

The Gly-cisPro motif, important for rejection of L-amino acids signature appears at 137–138 (GP).

It belongs to the DTD family. As to quaternary structure, homodimer.

It is found in the cytoplasm. It catalyses the reaction glycyl-tRNA(Ala) + H2O = tRNA(Ala) + glycine + H(+). It carries out the reaction a D-aminoacyl-tRNA + H2O = a tRNA + a D-alpha-amino acid + H(+). An aminoacyl-tRNA editing enzyme that deacylates mischarged D-aminoacyl-tRNAs. Also deacylates mischarged glycyl-tRNA(Ala), protecting cells against glycine mischarging by AlaRS. Acts via tRNA-based rather than protein-based catalysis; rejects L-amino acids rather than detecting D-amino acids in the active site. By recycling D-aminoacyl-tRNA to D-amino acids and free tRNA molecules, this enzyme counteracts the toxicity associated with the formation of D-aminoacyl-tRNA entities in vivo and helps enforce protein L-homochirality. This Pseudomonas syringae pv. tomato (strain ATCC BAA-871 / DC3000) protein is D-aminoacyl-tRNA deacylase.